Reading from the N-terminus, the 226-residue chain is Late protein I226R (226 aa).

Residues 1–16 (MKMETFLVCLFHNADG) form the signal peptide. N142 and N164 each carry an N-linked (GlcNAc...) asparagine; by host glycan.

It belongs to the asfivirus I226R family.

Its function is as follows. Plays a role in the inhibition of host NF-kappa-B and IRF3 signaling pathways. Mechanistically, promotes the degradation of host IKBKG through enhancing its ubiquitination leading to inhibition of both pathways. The polypeptide is Late protein I226R (African swine fever virus (isolate Tick/South Africa/Pretoriuskop Pr4/1996) (ASFV)).